Consider the following 413-residue polypeptide: Protein trichome birefringence-like 9 (413 aa).

The chain crosses the membrane as a helical; Signal-anchor for type II membrane protein span at residues 22 to 42; that stretch reads LFVSLFLLSLLIFSTVVVDVM. The GDS motif motif lies at 141–143; the sequence is GDS. A DCXHWCLPGXXDXWN motif motif is present at residues 384–398; it reads DCSHWCLPGVPDTWN.

The protein belongs to the PC-esterase family. TBL subfamily.

It localises to the membrane. Functionally, may act as a bridging protein that binds pectin and other cell wall polysaccharides. Probably involved in maintaining esterification of pectins. May be involved in the specific O-acetylation of cell wall polymers. The sequence is that of Protein trichome birefringence-like 9 (TBL9) from Arabidopsis thaliana (Mouse-ear cress).